A 219-amino-acid polypeptide reads, in one-letter code: 7-cyano-7-deazaguanine synthase (219 aa).

ATP is bound at residue 10–20 (FSGGQDSTTCL). Residues C188, C196, C199, and C202 each coordinate Zn(2+).

Belongs to the QueC family. The cofactor is Zn(2+).

It carries out the reaction 7-carboxy-7-deazaguanine + NH4(+) + ATP = 7-cyano-7-deazaguanine + ADP + phosphate + H2O + H(+). Its pathway is purine metabolism; 7-cyano-7-deazaguanine biosynthesis. Its function is as follows. Catalyzes the ATP-dependent conversion of 7-carboxy-7-deazaguanine (CDG) to 7-cyano-7-deazaguanine (preQ(0)). The chain is 7-cyano-7-deazaguanine synthase from Neisseria meningitidis serogroup C / serotype 2a (strain ATCC 700532 / DSM 15464 / FAM18).